The following is a 318-amino-acid chain: Aspartate carbamoyltransferase catalytic subunit (318 aa).

Arg59 and Thr60 together coordinate carbamoyl phosphate. Lys87 lines the L-aspartate pocket. The carbamoyl phosphate site is built by Arg109, His137, and Gln140. Arg170 and Arg224 together coordinate L-aspartate. Positions 265 and 266 each coordinate carbamoyl phosphate.

The protein belongs to the aspartate/ornithine carbamoyltransferase superfamily. ATCase family. In terms of assembly, heterododecamer (2C3:3R2) of six catalytic PyrB chains organized as two trimers (C3), and six regulatory PyrI chains organized as three dimers (R2).

The enzyme catalyses carbamoyl phosphate + L-aspartate = N-carbamoyl-L-aspartate + phosphate + H(+). It participates in pyrimidine metabolism; UMP biosynthesis via de novo pathway; (S)-dihydroorotate from bicarbonate: step 2/3. Catalyzes the condensation of carbamoyl phosphate and aspartate to form carbamoyl aspartate and inorganic phosphate, the committed step in the de novo pyrimidine nucleotide biosynthesis pathway. This Rhizobium etli (strain ATCC 51251 / DSM 11541 / JCM 21823 / NBRC 15573 / CFN 42) protein is Aspartate carbamoyltransferase catalytic subunit.